We begin with the raw amino-acid sequence, 637 residues long: 1-deoxy-D-xylulose-5-phosphate synthase (637 aa).

Residues His-74 and 115–117 (GHS) contribute to the thiamine diphosphate site. Position 146 (Asp-146) interacts with Mg(2+). Thiamine diphosphate is bound by residues 147-148 (GA), Asn-175, Tyr-285, and Glu-366. Asn-175 contributes to the Mg(2+) binding site.

Belongs to the transketolase family. DXPS subfamily. In terms of assembly, homodimer. Mg(2+) serves as cofactor. The cofactor is thiamine diphosphate.

It carries out the reaction D-glyceraldehyde 3-phosphate + pyruvate + H(+) = 1-deoxy-D-xylulose 5-phosphate + CO2. It participates in metabolic intermediate biosynthesis; 1-deoxy-D-xylulose 5-phosphate biosynthesis; 1-deoxy-D-xylulose 5-phosphate from D-glyceraldehyde 3-phosphate and pyruvate: step 1/1. Its function is as follows. Catalyzes the acyloin condensation reaction between C atoms 2 and 3 of pyruvate and glyceraldehyde 3-phosphate to yield 1-deoxy-D-xylulose-5-phosphate (DXP). This is 1-deoxy-D-xylulose-5-phosphate synthase from Pelotomaculum thermopropionicum (strain DSM 13744 / JCM 10971 / SI).